A 230-amino-acid chain; its full sequence is Probable tetraspanin tspD (230 aa).

Residues 1–20 (MVEYLPSTPRYLKVPLIILN) are Cytoplasmic-facing. Residues 21-41 (VILWLLGLVLVIIGGICVGFF) form a helical membrane-spanning segment. Residues 42 to 65 (SRFKELQEVGGVSESIKSISVSLP) lie on the Extracellular side of the membrane. The chain crosses the membrane as a helical span at residues 66-86 (AGVLSIGIFFMVLTVAGCIVA). At 87–90 (YKEK) the chain is on the cytoplasmic side. The chain crosses the membrane as a helical span at residues 91 to 111 (MVGLVFYTILMLVLLVVLIGI). Topologically, residues 112-200 (GGEALTYHNA…VNSKLYLVGS (89 aa)) are extracellular. N-linked (GlcNAc...) asparagine glycans are attached at residues asparagine 133, asparagine 138, asparagine 163, and asparagine 179. Residues 201–221 (AGVAIGVIELVSLMFALFLIV) form a helical membrane-spanning segment. Residues 222-230 (RLYKSNSYR) are Cytoplasmic-facing.

Belongs to the tetraspanin (TM4SF) family.

The protein resides in the membrane. The chain is Probable tetraspanin tspD (tspD) from Dictyostelium discoideum (Social amoeba).